We begin with the raw amino-acid sequence, 409 residues long: Peptidase T (409 aa).

Zn(2+) is bound at residue histidine 78. Aspartate 80 is an active-site residue. Zn(2+) is bound at residue aspartate 141. Glutamate 175 (proton acceptor) is an active-site residue. Residues glutamate 176, aspartate 198, and histidine 380 each coordinate Zn(2+).

It belongs to the peptidase M20B family. The cofactor is Zn(2+).

Its subcellular location is the cytoplasm. It catalyses the reaction Release of the N-terminal residue from a tripeptide.. Functionally, cleaves the N-terminal amino acid of tripeptides. The polypeptide is Peptidase T (Caldanaerobacter subterraneus subsp. tengcongensis (strain DSM 15242 / JCM 11007 / NBRC 100824 / MB4) (Thermoanaerobacter tengcongensis)).